A 368-amino-acid chain; its full sequence is Germination protease (368 aa).

Positions 1–16 (MKKSELDVNQYLIRTD) are excised as a propeptide.

The protein belongs to the peptidase A25 family. As to quaternary structure, homotetramer. In terms of processing, autoproteolytically processed. The inactive tetrameric zymogen termed p46 autoprocesses to a smaller form termed p41, which is active only during spore germination.

The catalysed reaction is Endopeptidase action with P4 Glu or Asp, P1 preferably Glu &gt; Asp, P1' hydrophobic and P2' Ala.. Functionally, initiates the degradation of small, acid-soluble proteins during spore germination. This is Germination protease (gpr) from Bacillus subtilis (strain 168).